The sequence spans 398 residues: 2,3-bisphosphoglycerate-independent phosphoglycerate mutase (398 aa).

It belongs to the BPG-independent phosphoglycerate mutase family. A-PGAM subfamily.

The enzyme catalyses (2R)-2-phosphoglycerate = (2R)-3-phosphoglycerate. It participates in carbohydrate degradation; glycolysis; pyruvate from D-glyceraldehyde 3-phosphate: step 3/5. In terms of biological role, catalyzes the interconversion of 2-phosphoglycerate and 3-phosphoglycerate. This chain is 2,3-bisphosphoglycerate-independent phosphoglycerate mutase, found in Methanosarcina barkeri (strain Fusaro / DSM 804).